The following is a 359-amino-acid chain: Peptide chain release factor 1 (359 aa).

Q235 is modified (N5-methylglutamine).

Belongs to the prokaryotic/mitochondrial release factor family. In terms of processing, methylated by PrmC. Methylation increases the termination efficiency of RF1.

It localises to the cytoplasm. Functionally, peptide chain release factor 1 directs the termination of translation in response to the peptide chain termination codons UAG and UAA. In Nitrosomonas europaea (strain ATCC 19718 / CIP 103999 / KCTC 2705 / NBRC 14298), this protein is Peptide chain release factor 1.